A 258-amino-acid polypeptide reads, in one-letter code: Tryptophan synthase alpha chain (258 aa).

Catalysis depends on proton acceptor residues Glu-52 and Asp-63.

The protein belongs to the TrpA family. As to quaternary structure, tetramer of two alpha and two beta chains.

It catalyses the reaction (1S,2R)-1-C-(indol-3-yl)glycerol 3-phosphate + L-serine = D-glyceraldehyde 3-phosphate + L-tryptophan + H2O. Its pathway is amino-acid biosynthesis; L-tryptophan biosynthesis; L-tryptophan from chorismate: step 5/5. In terms of biological role, the alpha subunit is responsible for the aldol cleavage of indoleglycerol phosphate to indole and glyceraldehyde 3-phosphate. The chain is Tryptophan synthase alpha chain from Streptococcus pneumoniae (strain ATCC 700669 / Spain 23F-1).